A 347-amino-acid chain; its full sequence is Protein YIPF1 homolog (347 aa).

The interval 1 to 115 (MSNYNNKHHD…FSDNVPLNTN (115 aa)) is disordered. Topologically, residues 1–166 (MSNYNNKHHD…FFNLIRENPD (166 aa)) are cytoplasmic. Residues 34–47 (NLFPNTNIDYNDYT) show a composition bias toward polar residues. Composition is skewed to low complexity over residues 48 to 67 (QNRG…LQFQ) and 76 to 104 (NSNT…SSNN). The span at 105–115 (KFSDNVPLNTN) shows a compositional bias: polar residues. A helical transmembrane segment spans residues 167-187 (LYGPFWVLTSLVFIVAVTSNL). Topologically, residues 188–207 (NEYFHSSDHKSWEVDIQKIV) are lumenal. The chain crosses the membrane as a helical span at residues 208-228 (YSAITIYGYSFVIPLILWGIF). The Cytoplasmic segment spans residues 229 to 232 (KWMN). Residues 233–253 (LGLRLLDMLCIYGYTLFIFVP) traverse the membrane as a helical segment. Residues 254–255 (AS) lie on the Lumenal side of the membrane. The chain crosses the membrane as a helical span at residues 256-276 (ILCVIPLQLVQWIIVAIASIV). The Cytoplasmic segment spans residues 277-296 (SGLFLVTNIFTPLKEDFTKR). A helical transmembrane segment spans residues 297–317 (GLIICAVIGALHIGLALVLKL). Residues 318–347 (YFFANSTENFTISDSSSTPTPTPTNTTKLL) lie on the Lumenal side of the membrane. 3 N-linked (GlcNAc...) asparagine glycosylation sites follow: asparagine 322, asparagine 326, and asparagine 342.

The protein belongs to the YIP1 family.

It localises to the golgi apparatus. The protein resides in the cis-Golgi network membrane. It is found in the trans-Golgi network membrane. The protein localises to the late endosome membrane. The chain is Protein YIPF1 homolog (yipf1) from Dictyostelium discoideum (Social amoeba).